The primary structure comprises 141 residues: MVDMDRISISLPTNLLAEFDEIIEERGYASRSEAIRDSIRDYLIKHKWIHSLEGDRAGTISIIYDHHSTDVMEKLTNIQHDYEKLIVATIHMHLDHDHCMEVVLVKGDASEIKELTDKLTSQKGVKQVKLTVMVPGGNIPQ.

The Ni(2+) site is built by histidine 80, histidine 91, histidine 93, and cysteine 99.

This sequence belongs to the transcriptional regulatory CopG/NikR family. It depends on Ni(2+) as a cofactor.

Its function is as follows. Transcriptional regulator. In Methanococcus maripaludis (strain C5 / ATCC BAA-1333), this protein is Putative nickel-responsive regulator.